Reading from the N-terminus, the 564-residue chain is Nucleoprotein (564 aa).

The segment at 54-236 is binding site for the cap structure m7GTP; sequence LRKNKRGEED…VTKDESSINI (183 aa). 2 residues coordinate Mn(2+): D380 and E382. Positions 390, 497, 500, and 525 each coordinate Zn(2+). Position 529 (D529) interacts with Mn(2+).

It belongs to the arenaviridae nucleocapsid protein family. Homomultimerizes to form the nucleocapsid. Binds to viral genomic RNA. Interacts with glycoprotein G2. Interacts with protein Z; this interaction probably directs the encapsidated genome to budding sites. Interacts with protein L; this interaction does not interfere with Z-L interaction. Interacts with host IKBKE (via Protein kinase domain); the interaction inhibits IKBKE kinase activity.

Its subcellular location is the virion. It is found in the host cytoplasm. Its function is as follows. Encapsidates the genome, protecting it from nucleases. The encapsidated genomic RNA is termed the nucleocapsid (NC). Serves as template for viral transcription and replication. The increased presence of protein N in host cell does not seem to trigger the switch from transcription to replication as observed in other negative strain RNA viruses. Through the interaction with host IKBKE, strongly inhibits the phosphorylation and nuclear translocation of host IRF3, a protein involved in interferon activation pathway, leading to the inhibition of interferon-beta and IRF3-dependent promoters activation. Also encodes a functional 3'-5' exoribonuclease that degrades preferentially dsRNA substrates and thereby participates in the suppression of interferon induction. This Calomys callosus (Large vesper mouse) protein is Nucleoprotein.